The following is a 191-amino-acid chain: ATP synthase subunit delta (191 aa).

Belongs to the ATPase delta chain family. F-type ATPases have 2 components, F(1) - the catalytic core - and F(0) - the membrane proton channel. F(1) has five subunits: alpha(3), beta(3), gamma(1), delta(1), epsilon(1). F(0) has three main subunits: a(1), b(2) and c(10-14). The alpha and beta chains form an alternating ring which encloses part of the gamma chain. F(1) is attached to F(0) by a central stalk formed by the gamma and epsilon chains, while a peripheral stalk is formed by the delta and b chains.

The protein resides in the cell inner membrane. In terms of biological role, f(1)F(0) ATP synthase produces ATP from ADP in the presence of a proton or sodium gradient. F-type ATPases consist of two structural domains, F(1) containing the extramembraneous catalytic core and F(0) containing the membrane proton channel, linked together by a central stalk and a peripheral stalk. During catalysis, ATP synthesis in the catalytic domain of F(1) is coupled via a rotary mechanism of the central stalk subunits to proton translocation. This protein is part of the stalk that links CF(0) to CF(1). It either transmits conformational changes from CF(0) to CF(1) or is implicated in proton conduction. The polypeptide is ATP synthase subunit delta (Halothermothrix orenii (strain H 168 / OCM 544 / DSM 9562)).